A 289-amino-acid chain; its full sequence is 33 kDa chaperonin (289 aa).

Disulfide bonds link Cys229-Cys231 and Cys262-Cys265.

It belongs to the HSP33 family. Under oxidizing conditions two disulfide bonds are formed involving the reactive cysteines. Under reducing conditions zinc is bound to the reactive cysteines and the protein is inactive.

It localises to the cytoplasm. Redox regulated molecular chaperone. Protects both thermally unfolding and oxidatively damaged proteins from irreversible aggregation. Plays an important role in the bacterial defense system toward oxidative stress. In Pectobacterium carotovorum subsp. carotovorum (strain PC1), this protein is 33 kDa chaperonin.